A 769-amino-acid chain; its full sequence is MAEITSLFNNSSGSEEKRIASSVSIDQGLNGSNPNDQYKNMFDIYWNEYAPDIGFCTFPEEDGWMLIHPTTQSMLFRKILAGDFGYTDGQGIYSAVRSTETVIRQVQATVLMNALDATRYEDLAADWEHHIQQCNLHAGALAERYGLCGESEAVRLAHQVFETWRQTLQSSLLEFLRGITGCLYTSGLNGRVGFAKYVDWIACVGIVPVVRKVRSEQNGTPAPLNTYMGQAAELSQMLKVADATLARGAAVVTSLVECMQNVAIMDYDRTRLYYNYNRRLIMAKDDVTGMKGECLVVWPPVVCGEGVVFDSPLQRLSGEVLACYALREHARVCQVLNTAPLRVLIGRRNEDDRSHSTRAVDRIMGENDTTRAGSAASRLVKLIVNLKNMRHVGDITETVRSYLEETGNHILEGSGSVDTSQPGFGKANQSFNGGAMSGTTNVQSAFKTSVVNSINGMLEGYVNNLFKTIEGLKDVNSDLTERLQFKEGELKRLREERVKIKPSKGSHITMAEETRIADLNHEVIDLTGIIGDDAYIANSFQSRYIPPYGDDIKRLSELWKQELVRCFKLHRVNNNQGQEISVSYSNASISLLVAPYFSFILRATRLGFLVTQSEVHRSEEELCQAIFKKARTESYLSQIRILYEMQVRAEVIKRGPRRTPSPSWGLPDPTEDDERIPEPNKINNQYMHVGYKNLSHFMKGHPPERLRVHKVNAADSTLLDKIRANRRRGDGRWDVRNKYTQHFRLQRNDRQLTNTSRRGVGCERRDRRS.

The tract at residues 458 to 479 (LEGYVNNLFKTIEGLKDVNSDL) is putative leucine zipper motif. Disordered stretches follow at residues 654-675 (RGPRRTPSPSWGLPDPTEDDER) and 750-769 (RQLTNTSRRGVGCERRDRRS). Positions 760-769 (VGCERRDRRS) are enriched in basic and acidic residues.

The protein belongs to the herpesviridae portal protein family. As to quaternary structure, homododecamerizes. Interacts with terminase subunits TRM1 and TRM3.

The protein localises to the virion. The protein resides in the host nucleus. In terms of biological role, forms a portal in the viral capsid through which viral DNA is translocated during DNA packaging. Assembles as a dodecamer at a single fivefold axe of the T=16 icosahedric capsid. Binds to the molecular motor that translocates the viral DNA, termed terminase. The sequence is that of Portal protein (54) from Homo sapiens (Human).